Here is a 238-residue protein sequence, read N- to C-terminus: Uridylate kinase (238 aa).

Lys12–Gly15 is an ATP binding site. Gly54 lines the UMP pocket. ATP is bound by residues Gly55 and Arg59. Residues Asp74 and Thr135–Thr142 contribute to the UMP site. ATP-binding residues include Thr162, Tyr168, and Asp171.

The protein belongs to the UMP kinase family. In terms of assembly, homohexamer.

It is found in the cytoplasm. The catalysed reaction is UMP + ATP = UDP + ADP. It participates in pyrimidine metabolism; CTP biosynthesis via de novo pathway; UDP from UMP (UMPK route): step 1/1. Its activity is regulated as follows. Inhibited by UTP. In terms of biological role, catalyzes the reversible phosphorylation of UMP to UDP. The protein is Uridylate kinase of Lawsonia intracellularis (strain PHE/MN1-00).